The sequence spans 408 residues: Arginine biosynthesis bifunctional protein ArgJ (408 aa).

The substrate site is built by Thr158, Lys184, Thr195, Glu281, Asn403, and Thr408. Thr195 acts as the Nucleophile in catalysis.

This sequence belongs to the ArgJ family. In terms of assembly, heterotetramer of two alpha and two beta chains.

The protein resides in the cytoplasm. It carries out the reaction N(2)-acetyl-L-ornithine + L-glutamate = N-acetyl-L-glutamate + L-ornithine. It catalyses the reaction L-glutamate + acetyl-CoA = N-acetyl-L-glutamate + CoA + H(+). The protein operates within amino-acid biosynthesis; L-arginine biosynthesis; L-ornithine and N-acetyl-L-glutamate from L-glutamate and N(2)-acetyl-L-ornithine (cyclic): step 1/1. Its pathway is amino-acid biosynthesis; L-arginine biosynthesis; N(2)-acetyl-L-ornithine from L-glutamate: step 1/4. Its function is as follows. Catalyzes two activities which are involved in the cyclic version of arginine biosynthesis: the synthesis of N-acetylglutamate from glutamate and acetyl-CoA as the acetyl donor, and of ornithine by transacetylation between N(2)-acetylornithine and glutamate. The polypeptide is Arginine biosynthesis bifunctional protein ArgJ (Bacillus cereus (strain ATCC 14579 / DSM 31 / CCUG 7414 / JCM 2152 / NBRC 15305 / NCIMB 9373 / NCTC 2599 / NRRL B-3711)).